The chain runs to 478 residues: MTLSFITRWRDELPETYTALSPTPLNNARLIWHNTELANTLSIPSSLFKNGAGVWGGETLLPGMSPLAQVYSGHQFGVWAGQLGDGRGILLGEQLLADGTTMDWHLKGAGLTPYSRMGDGRAVLRSTIRESLASEAMHYLGIPTTRALSIVTSDSPVYRETVEPGAMLMRVAPSHLRFGHFEHFYYRREPDKVRQLADFAIRHYWSHLEDDEDKYRLWFNDVVARTASLIAQWQTVGFAHGVMNTDNMSLLGLTLDYGPFGFLNDYEPGFICNHSDHQGRYSFDNQPAVALWILQRLAQTLSPFVAVDALNEALDSYQQVLLTHYGQRMRQKLGFMTEQKEDNALLNELFSLMARERSDYTRTFRMLSLTEQHSAASPLRDEFIDRAAFDDWFARYRGRLQQDEVSDSERQQLMQSVNPALVLRNWLAQRAIEAAEKGDMTELHRLHEALRNPFSDRDDDYVSRPPDWGKRLEVSCSS.

ATP contacts are provided by Gly-84, Gly-86, Arg-87, Lys-107, Asp-119, Gly-120, Arg-170, and Arg-177. The active-site Proton acceptor is Asp-246. The Mg(2+) site is built by Asn-247 and Asp-256. Asp-256 is an ATP binding site.

It belongs to the SELO family. The cofactor is Mg(2+). It depends on Mn(2+) as a cofactor.

It carries out the reaction L-seryl-[protein] + ATP = 3-O-(5'-adenylyl)-L-seryl-[protein] + diphosphate. The enzyme catalyses L-threonyl-[protein] + ATP = 3-O-(5'-adenylyl)-L-threonyl-[protein] + diphosphate. The catalysed reaction is L-tyrosyl-[protein] + ATP = O-(5'-adenylyl)-L-tyrosyl-[protein] + diphosphate. It catalyses the reaction L-histidyl-[protein] + UTP = N(tele)-(5'-uridylyl)-L-histidyl-[protein] + diphosphate. It carries out the reaction L-seryl-[protein] + UTP = O-(5'-uridylyl)-L-seryl-[protein] + diphosphate. The enzyme catalyses L-tyrosyl-[protein] + UTP = O-(5'-uridylyl)-L-tyrosyl-[protein] + diphosphate. Nucleotidyltransferase involved in the post-translational modification of proteins. It can catalyze the addition of adenosine monophosphate (AMP) or uridine monophosphate (UMP) to a protein, resulting in modifications known as AMPylation and UMPylation. The protein is Protein nucleotidyltransferase YdiU of Escherichia coli O157:H7.